Reading from the N-terminus, the 335-residue chain is Fructose-1,6-bisphosphatase class 1 (335 aa).

Glu-90, Asp-113, Leu-115, and Asp-116 together coordinate Mg(2+). Residues 116–119, Asn-209, Tyr-242, and Lys-272 contribute to the substrate site; that span reads DGSS. Residue Glu-278 coordinates Mg(2+).

The protein belongs to the FBPase class 1 family. Homotetramer. Requires Mg(2+) as cofactor.

The protein resides in the cytoplasm. It carries out the reaction beta-D-fructose 1,6-bisphosphate + H2O = beta-D-fructose 6-phosphate + phosphate. It functions in the pathway carbohydrate biosynthesis; gluconeogenesis. This chain is Fructose-1,6-bisphosphatase class 1, found in Mannheimia succiniciproducens (strain KCTC 0769BP / MBEL55E).